A 189-amino-acid chain; its full sequence is Chitin synthase 1 (189 aa).

This sequence belongs to the chitin synthase family. Class I subfamily.

It is found in the cell membrane. It carries out the reaction [(1-&gt;4)-N-acetyl-beta-D-glucosaminyl](n) + UDP-N-acetyl-alpha-D-glucosamine = [(1-&gt;4)-N-acetyl-beta-D-glucosaminyl](n+1) + UDP + H(+). In terms of biological role, polymerizes chitin, a structural polymer of the cell wall and septum, by transferring the sugar moiety of UDP-GlcNAc to the non-reducing end of the growing chitin polymer. The chain is Chitin synthase 1 (CHS1) from Ajellomyces capsulatus (Darling's disease fungus).